The sequence spans 463 residues: Phosphomannomutase/phosphoglucomutase (463 aa).

S108 serves as the catalytic Phosphoserine intermediate. Mg(2+) contacts are provided by S108, D242, D244, and D246. 3 residues coordinate substrate: E325, S327, and H329.

It belongs to the phosphohexose mutase family. In terms of assembly, monomer. It depends on Mg(2+) as a cofactor.

The enzyme catalyses alpha-D-mannose 1-phosphate = D-mannose 6-phosphate. The catalysed reaction is alpha-D-glucose 1-phosphate = alpha-D-glucose 6-phosphate. It functions in the pathway nucleotide-sugar biosynthesis; GDP-alpha-D-mannose biosynthesis; alpha-D-mannose 1-phosphate from D-fructose 6-phosphate: step 2/2. Its pathway is bacterial outer membrane biogenesis; lipopolysaccharide biosynthesis. In terms of biological role, the phosphomannomutase activity produces a precursor for alginate polymerization. The alginate layer causes a mucoid phenotype and provides a protective barrier against host immune defenses and antibiotics. Also involved in core-LPS biosynthesis due to its phosphoglucomutase activity. Essential for biofilm production. This chain is Phosphomannomutase/phosphoglucomutase (algC), found in Pseudomonas putida (strain ATCC 47054 / DSM 6125 / CFBP 8728 / NCIMB 11950 / KT2440).